Consider the following 59-residue polypeptide: Potassium channel toxin alpha-KTx 4.7 (59 aa).

The signal sequence occupies residues 1–22 (MKAFYGILIIFILISMLDLSQQ). Intrachain disulfides connect C29–C50, C35–C55, and C39–C57. The tract at residues 48–55 (GKCMNGKC) is interaction with Ca(2+)-activated K(+) channels.

This sequence belongs to the short scorpion toxin superfamily. Potassium channel inhibitor family. Alpha-KTx 04 subfamily. Expressed by the venom gland.

It is found in the secreted. Functionally, potently blocks Kv1.1/KCNA1 (85%), Kv1.2/KCNA2 (91%), Kv1.3/KCNA3 (89%), Kv1.6/KCNA6 (94%), and Shaker (97%). The protein is Potassium channel toxin alpha-KTx 4.7 of Tityus stigmurus (Brazilian scorpion).